Reading from the N-terminus, the 157-residue chain is 6,7-dimethyl-8-ribityllumazine synthase 2 (157 aa).

5-amino-6-(D-ribitylamino)uracil-binding positions include Trp-21, 55 to 57, and 79 to 81; these read AYE and FVV. Arg-87 functions as the Proton donor in the catalytic mechanism. Residue Ser-112 participates in 5-amino-6-(D-ribitylamino)uracil binding. A (2S)-2-hydroxy-3-oxobutyl phosphate-binding site is contributed by His-126.

This sequence belongs to the DMRL synthase family. Homodecamer, arranged as a dimer of pentamers.

The enzyme catalyses (2S)-2-hydroxy-3-oxobutyl phosphate + 5-amino-6-(D-ribitylamino)uracil = 6,7-dimethyl-8-(1-D-ribityl)lumazine + phosphate + 2 H2O + H(+). The protein operates within cofactor biosynthesis; riboflavin biosynthesis; riboflavin from 2-hydroxy-3-oxobutyl phosphate and 5-amino-6-(D-ribitylamino)uracil: step 1/2. Catalyzes the formation of 6,7-dimethyl-8-ribityllumazine by condensation of 5-amino-6-(D-ribitylamino)uracil with 3,4-dihydroxy-2-butanone 4-phosphate. This is the penultimate step in the biosynthesis of riboflavin. This Mesorhizobium japonicum (strain LMG 29417 / CECT 9101 / MAFF 303099) (Mesorhizobium loti (strain MAFF 303099)) protein is 6,7-dimethyl-8-ribityllumazine synthase 2 (ribH2).